Reading from the N-terminus, the 476-residue chain is Cysteine--tRNA ligase (476 aa).

Cys-29 contributes to the Zn(2+) binding site. Residues 31–41 (PTVYDYTHLGH) carry the 'HIGH' region motif. Cys-209, His-234, and Glu-238 together coordinate Zn(2+). The 'KMSKS' region signature appears at 266–270 (KMSKS). Lys-269 contributes to the ATP binding site.

Belongs to the class-I aminoacyl-tRNA synthetase family. Zn(2+) is required as a cofactor.

The protein resides in the cytoplasm. The enzyme catalyses tRNA(Cys) + L-cysteine + ATP = L-cysteinyl-tRNA(Cys) + AMP + diphosphate. In Thermococcus onnurineus (strain NA1), this protein is Cysteine--tRNA ligase.